A 169-amino-acid chain; its full sequence is Probable metallophosphoesterase YsnB (169 aa).

Mn(2+) is bound by residues aspartate 8, histidine 10, aspartate 35, asparagine 54, histidine 78, histidine 107, and histidine 109.

It belongs to the metallophosphoesterase superfamily. YfcE family. Mn(2+) is required as a cofactor.

The sequence is that of Probable metallophosphoesterase YsnB (ysnB) from Bacillus subtilis (strain 168).